The chain runs to 432 residues: Adenylosuccinate synthetase (432 aa).

Residues G12–K18 and G40–T42 each bind GTP. D13 (proton acceptor) is an active-site residue. Mg(2+) contacts are provided by D13 and G40. IMP-binding positions include D13–K16, N38–H41, T130, R144, Q225, T240, and R304. H41 (proton donor) is an active-site residue. A300–R306 serves as a coordination point for substrate. GTP is bound by residues R306, K332–D334, and S414–G416.

Belongs to the adenylosuccinate synthetase family. Homodimer. The cofactor is Mg(2+).

Its subcellular location is the cytoplasm. It carries out the reaction IMP + L-aspartate + GTP = N(6)-(1,2-dicarboxyethyl)-AMP + GDP + phosphate + 2 H(+). It participates in purine metabolism; AMP biosynthesis via de novo pathway; AMP from IMP: step 1/2. Its function is as follows. Plays an important role in the de novo pathway of purine nucleotide biosynthesis. Catalyzes the first committed step in the biosynthesis of AMP from IMP. The sequence is that of Adenylosuccinate synthetase from Anaeromyxobacter dehalogenans (strain 2CP-C).